The following is a 173-amino-acid chain: Mediator of RNA polymerase II transcription subunit 19 (173 aa).

The interval leucine 139–isoleucine 173 is disordered.

This sequence belongs to the Mediator complex subunit 19 family. As to quaternary structure, component of the Mediator complex.

Its subcellular location is the nucleus. Functionally, component of the Mediator complex, a coactivator involved in the regulated transcription of nearly all RNA polymerase II-dependent genes. Mediator functions as a bridge to convey information from gene-specific regulatory proteins to the basal RNA polymerase II transcription machinery. Mediator is recruited to promoters by direct interactions with regulatory proteins and serves as a scaffold for the assembly of a functional preinitiation complex with RNA polymerase II and the general transcription factors. This chain is Mediator of RNA polymerase II transcription subunit 19 (ROX3), found in Scheffersomyces stipitis (strain ATCC 58785 / CBS 6054 / NBRC 10063 / NRRL Y-11545) (Yeast).